Reading from the N-terminus, the 287-residue chain is mRNA-capping enzyme regulatory subunit (287 aa).

The protein belongs to the chordopoxvirinae mRNA-capping enzyme regulatory subunit family. As to quaternary structure, heterodimer of a catalytic and a regulatory subunit. Intrinsic methyltransferase activity of the catalytic subunit is weak and needs to be stimulated 30- to 50-fold by the regulatory subunit, which is itself catalytically inert.

It localises to the virion. Its function is as follows. Regulatory subunit of the mRNA cap enzyme which stabilizes the catalytic subunit and enhances its methyltransferase activity through an allosteric mechanism. Heterodimeric mRNA capping enzyme catalyzes the linkage of a N7-methyl-guanosine moiety to the first transcribed nucleotide (cap 0 structure), whereas the polymerase associated VP39 is responsible for a second methylation at the 2'-O position of the ribose (cap 1 structure). Functionally, the heterodimeric enzyme is also involved in early viral gene transcription termination and intermediate viral gene transcription initiation. Early gene transcription termination requires the termination factor VTF, the DNA-dependent ATPase NPH-I and the Rap94 subunit of the viral RNA polymerase, as well as the presence of a specific termination motif. Binds, together with RAP94, to the termination motif 5'-UUUUUNU-3' in the nascent early mRNA. This Vaccinia virus (strain Ankara) (VACV) protein is mRNA-capping enzyme regulatory subunit.